Here is a 509-residue protein sequence, read N- to C-terminus: Ribonuclease Y (509 aa).

A helical membrane pass occupies residues 1–21; sequence MIILVAVVTAVISFGLGYVVA. The KH domain occupies 199 to 259; it reads TVSTVSLPSD…IRREIARLTL (61 aa). Residues 325–418 form the HD domain; sequence VLDHSIEVAQ…VAAADALSAA (94 aa).

The protein belongs to the RNase Y family.

It localises to the cell membrane. Functionally, endoribonuclease that initiates mRNA decay. The polypeptide is Ribonuclease Y (Pseudothermotoga lettingae (strain ATCC BAA-301 / DSM 14385 / NBRC 107922 / TMO) (Thermotoga lettingae)).